Consider the following 430-residue polypeptide: Tyrosine--tRNA ligase (430 aa).

Tyr-32 lines the L-tyrosine pocket. Residues 37-46 carry the 'HIGH' region motif; sequence PTADSLHIGH. Residues Tyr-172 and Gln-176 each contribute to the L-tyrosine site. Residues 232–236 carry the 'KMSKS' region motif; that stretch reads KFGKT. Lys-235 contacts ATP. Residues 362–429 form the S4 RNA-binding domain; the sequence is VKAVDLFVDN…GKKNYYLIIA (68 aa).

The protein belongs to the class-I aminoacyl-tRNA synthetase family. TyrS type 1 subfamily. As to quaternary structure, homodimer.

The protein localises to the cytoplasm. It carries out the reaction tRNA(Tyr) + L-tyrosine + ATP = L-tyrosyl-tRNA(Tyr) + AMP + diphosphate + H(+). Catalyzes the attachment of tyrosine to tRNA(Tyr) in a two-step reaction: tyrosine is first activated by ATP to form Tyr-AMP and then transferred to the acceptor end of tRNA(Tyr). This chain is Tyrosine--tRNA ligase, found in Bacteroides fragilis (strain YCH46).